Reading from the N-terminus, the 60-residue chain is Large ribosomal subunit protein bL32 (60 aa).

The disordered stretch occupies residues 1 to 60; it reads MAVQQNKKSRSARDMRRSHDALEPNALSVEKSTGEVHLRHHVSPDGFYRGRKVIDKGADE. The span at 11–22 shows a compositional bias: basic and acidic residues; sequence SARDMRRSHDAL.

This sequence belongs to the bacterial ribosomal protein bL32 family.

The sequence is that of Large ribosomal subunit protein bL32 from Stutzerimonas stutzeri (strain A1501) (Pseudomonas stutzeri).